The chain runs to 269 residues: MEDSHKSNTTETASQPGSTVAGPHVSQIVHQVSSLSESEESQDSSDSIGSSQKAHGILARRPSYRKILKDLSSEDTRGRKGEGENPSISAITSMSVPAPIYQTSSGQYIAIAPNGALQLASPSTDGVQALQTLTMTNSSSTQQGTILQYAQTSDGQQILVPSNQVVVQTASGDMQTYQIRTTPSATSLPQTVVMTSPVTLASQTTKTDDPQLRREIRLMKNREAARECRRKKKEYVKCLENRVAVLENQNKTLIEELKTLKDLYSHKSV.

The tract at residues Met-1–Ala-90 is disordered. The span at Thr-9 to Ser-18 shows a compositional bias: polar residues. Positions Gln-31–Ala-90 constitute a KID domain. Phosphoserine; by CaMK1, CDK3, RPS6KA4 and RPS6KA5 is present on Ser-63. The span at Ile-67 to Gly-83 shows a compositional bias: basic and acidic residues. Ser-196 bears the Phosphoserine; by HIPK2 mark. Residue Lys-206 forms a Glycyl lysine isopeptide (Lys-Gly) (interchain with G-Cter in SUMO2) linkage. The bZIP domain maps to Gln-211–Val-269. Positions Arg-213–Lys-237 are basic motif. The leucine-zipper stretch occupies residues Leu-239 to Leu-260.

This sequence belongs to the bZIP family. ATF subfamily. In terms of assembly, binds DNA as a dimer. Interacts with HIPK2 and CDK3. Interacts with MOTS-c, a peptide produced by the mitochondrially encoded 12S rRNA MT-RNR1; the interaction occurs in the nucleus following metabolic stress. In terms of processing, phosphorylated at Ser-196 by HIPK2 in response to genotoxic stress. This phosphorylation promotes transcription repression of FTH1 and other antioxidant detoxification genes. The CDK3-mediated phosphorylation at Ser-63 promotes its transactivation and transcriptional activities. Phosphorylated at Ser-63 by RPS6KA4 and RPS6KA5 in response to mitogenic or stress stimuli.

The protein resides in the nucleus. In terms of biological role, binds the cAMP response element (CRE) (consensus: 5'-GTGACGT[AC][AG]-3'), a sequence present in many viral and cellular promoters. Binds to the Tax-responsive element (TRE) of HTLV-I. Mediates PKA-induced stimulation of CRE-reporter genes. Represses the expression of FTH1 and other antioxidant detoxification genes. Triggers cell proliferation and transformation. The protein is Cyclic AMP-dependent transcription factor ATF-1 (Atf1) of Mus musculus (Mouse).